The primary structure comprises 576 residues: Outer capsid protein VP4 (576 aa).

The protein localises to the virion. The sequence is that of Outer capsid protein VP4 (Segment-4) from Banna virus (BAV).